Here is a 302-residue protein sequence, read N- to C-terminus: MFRKQNLKWLGVLATIIMTFVQLGGALVTKTGSEDGCGSSWPLCNGALLPENLPIQTIIELSHRAVSAISLIVVLWLVITAWKNIGYIKEIKPLSIISVGFLLVQALVGAAAVIWQQNPYVLALHFGISLISFSSVFLMTLIIFSIDKKYEADILFIHKPLRILTWLMAIIVYLTIYTGALVRHTKSSLAYGAWPIPFDDIVPHNAHDWVQFSHRGMAFITFIWIMITFIHAIKNYSDNRTVRYGYTASFILVILQVITGALSVITNVNLIIALFHALFITYLFGMIAYFILLMLRTTRSLK.

Over 1-8 the chain is Cytoplasmic; that stretch reads MFRKQNLK. The chain crosses the membrane as a helical span at residues 9 to 29; the sequence is WLGVLATIIMTFVQLGGALVT. Topologically, residues 30–67 are extracellular; the sequence is KTGSEDGCGSSWPLCNGALLPENLPIQTIIELSHRAVS. A disulfide bridge connects residues cysteine 37 and cysteine 44. Glutamate 60 is a catalytic residue. Histidine 63 contributes to the heme o binding site. A helical membrane pass occupies residues 68–88; sequence AISLIVVLWLVITAWKNIGYI. Residues 89-93 are Cytoplasmic-facing; the sequence is KEIKP. A helical transmembrane segment spans residues 94-114; sequence LSIISVGFLLVQALVGAAAVI. The Extracellular segment spans residues 115-125; that stretch reads WQQNPYVLALH. Residue histidine 125 coordinates heme o. Residues 126–146 form a helical membrane-spanning segment; that stretch reads FGISLISFSSVFLMTLIIFSI. The Cytoplasmic portion of the chain corresponds to 147 to 161; it reads DKKYEADILFIHKPL. The helical transmembrane segment at 162–182 threads the bilayer; it reads RILTWLMAIIVYLTIYTGALV. Residues 183–215 are Extracellular-facing; the sequence is RHTKSSLAYGAWPIPFDDIVPHNAHDWVQFSHR. Histidine 214 contacts heme b. A helical transmembrane segment spans residues 216–236; it reads GMAFITFIWIMITFIHAIKNY. The Cytoplasmic portion of the chain corresponds to 237–244; it reads SDNRTVRY. A helical membrane pass occupies residues 245-265; sequence GYTASFILVILQVITGALSVI. The Extracellular portion of the chain corresponds to 266–270; it reads TNVNL. The helical transmembrane segment at 271–291 threads the bilayer; it reads IIALFHALFITYLFGMIAYFI. Histidine 276 contributes to the heme b binding site. Residues 292-302 lie on the Cytoplasmic side of the membrane; that stretch reads LLMLRTTRSLK.

This sequence belongs to the COX15/CtaA family. Type 1 subfamily. As to quaternary structure, interacts with CtaB. The cofactor is heme b.

The protein resides in the cell membrane. The catalysed reaction is Fe(II)-heme o + 2 A + H2O = Fe(II)-heme a + 2 AH2. The protein operates within porphyrin-containing compound metabolism; heme A biosynthesis; heme A from heme O: step 1/1. Catalyzes the conversion of heme O to heme A by two successive hydroxylations of the methyl group at C8. The first hydroxylation forms heme I, the second hydroxylation results in an unstable dihydroxymethyl group, which spontaneously dehydrates, resulting in the formyl group of heme A. This Staphylococcus epidermidis (strain ATCC 12228 / FDA PCI 1200) protein is Heme A synthase.